A 304-amino-acid polypeptide reads, in one-letter code: Transcription factor bHLH94 (304 aa).

The tract at residues 86 to 107 is disordered; that stretch reads VESHPPPQHRRKRRRTRNCKNK. The span at 92–104 shows a compositional bias: basic residues; that stretch reads PQHRRKRRRTRNC. The region spanning 112–163 is the bHLH domain; it reads NQRMTHIAVERNRRKQMNEYLAVLRSLMPSSYAQRGDQASIVGGAINYVKEL.

In terms of assembly, homodimer. As to expression, expressed constitutively in roots, leaves, stems, and flowers.

The protein resides in the nucleus. The chain is Transcription factor bHLH94 (BHLH94) from Arabidopsis thaliana (Mouse-ear cress).